The chain runs to 87 residues: Small ribosomal subunit protein uS17 (87 aa).

This sequence belongs to the universal ribosomal protein uS17 family. In terms of assembly, part of the 30S ribosomal subunit.

Functionally, one of the primary rRNA binding proteins, it binds specifically to the 5'-end of 16S ribosomal RNA. This chain is Small ribosomal subunit protein uS17, found in Geobacillus sp. (strain WCH70).